The sequence spans 157 residues: Small ribosomal subunit protein uS7 (157 aa).

Belongs to the universal ribosomal protein uS7 family. Part of the 30S ribosomal subunit. Contacts proteins S9 and S11.

Functionally, one of the primary rRNA binding proteins, it binds directly to 16S rRNA where it nucleates assembly of the head domain of the 30S subunit. Is located at the subunit interface close to the decoding center, probably blocks exit of the E-site tRNA. This is Small ribosomal subunit protein uS7 from Hydrogenovibrio crunogenus (strain DSM 25203 / XCL-2) (Thiomicrospira crunogena).